Reading from the N-terminus, the 232-residue chain is Flagellar L-ring protein (232 aa).

An N-terminal signal peptide occupies residues 1 to 21 (MQKNAAHTYAISSLLVLSLTG). Cys-22 carries N-palmitoyl cysteine lipidation. A lipid anchor (S-diacylglycerol cysteine) is attached at Cys-22.

The protein belongs to the FlgH family. As to quaternary structure, the basal body constitutes a major portion of the flagellar organelle and consists of four rings (L,P,S, and M) mounted on a central rod.

Its subcellular location is the cell outer membrane. The protein localises to the bacterial flagellum basal body. In terms of biological role, assembles around the rod to form the L-ring and probably protects the motor/basal body from shearing forces during rotation. The polypeptide is Flagellar L-ring protein (Escherichia coli O7:K1 (strain IAI39 / ExPEC)).